Reading from the N-terminus, the 33-residue chain is Brevinin-2Eb (33 aa).

Cysteines 27 and 33 form a disulfide.

Belongs to the frog skin active peptide (FSAP) family. Brevinin subfamily. Expressed by the skin glands.

It localises to the secreted. In terms of biological role, shows antibacterial activity against representative Gram-negative and Gram-positive bacterial species, and hemolytic activity. In Pelophylax lessonae (Pool frog), this protein is Brevinin-2Eb.